The chain runs to 138 residues: MEQTFFMIKPDGVKRGFIGEVISRIERRGFSIDRLEVRYADADILKRHYAELTDRPFFPTLVDYMTSGPVIIGVISGEEVISTWRTMMGSTNPKDALPGTIRGDFAQAPSPNQATCNIVHGSDSPESATREIAIWFNN.

ATP-binding residues include Lys-9, Phe-57, Arg-85, Thr-91, Arg-102, and Asn-112. His-120 acts as the Pros-phosphohistidine intermediate in catalysis.

It belongs to the NDK family. Homotetramer. Requires Mg(2+) as cofactor.

It is found in the cytoplasm. The catalysed reaction is a 2'-deoxyribonucleoside 5'-diphosphate + ATP = a 2'-deoxyribonucleoside 5'-triphosphate + ADP. The enzyme catalyses a ribonucleoside 5'-diphosphate + ATP = a ribonucleoside 5'-triphosphate + ADP. Its function is as follows. Major role in the synthesis of nucleoside triphosphates other than ATP. The ATP gamma phosphate is transferred to the NDP beta phosphate via a ping-pong mechanism, using a phosphorylated active-site intermediate. In Streptococcus agalactiae serotype V (strain ATCC BAA-611 / 2603 V/R), this protein is Nucleoside diphosphate kinase.